Reading from the N-terminus, the 732-residue chain is MVSQGSSPSLLEALSSDFLACKICLEQLRVPKTLPCLHTYCQDCLAQLAEGSRLRCPECRESVPVPPAGVAAFKTNFFVNGLLDLVKARAGGDLRAGKPACALCPLMGGASAGGPATARCLDCADDLCQACADGHRCTRQTHSHRVVDLVGYRAGWYDEEARERQAAQCPQHPGEALRFLCQPCSQLLCRECRLDPHLDHPCLPLAEAVRARRPGLEELLAGVDNNLAELEATRLAEKEALARLREQAAKVVTQVEEASERVLRALLAQKQEVLGQLRAHVEAAEEGARERLGELEGQEQVAREAAAFARRVLSLGREAEILSLEGAIAQRLRQLQGCPWVPGPAPCQLPQLELYPGLLDKNCHLLRLSFEEQLPQKDSGKDGARSQGGDATQPQSRDGVQTPNQEDGAKTPKESRAQTPQEDGGTQARVGSRSNKKRKFKGRLKSVSREPSPAPGPNLEGSGLLPRPIFFCSFPTRMPGDKRAPRITGLCPFGSREILVADEQNRALKRFSLNGDYRGAVPVPEGCSPCSVAALQDTVAFSAAARLYLINHNGEVQWRRALSLCQASHAVAAMPSGDRVAVSVSGHVEVYNMEGSLATRFIPGGKANRGLRALVFLTTSPQGHFVGSDWQQNSLVVCDGLGQVVGEYRGPGLHGCQPGSVSVDKKGYIFLTLREVNKVVILDPKGSLLGDFLTAYHGLEKPRVTTMVDGRYLVVSLSNGTIHVFRVRPLDS.

The segment at 21–60 adopts an RING-type zinc-finger fold; that stretch reads CKICLEQLRVPKTLPCLHTYCQDCLAQLAEGSRLRCPECR. A B box-type zinc finger spans residues 164–205; sequence RQAAQCPQHPGEALRFLCQPCSQLLCRECRLDPHLDHPCLPL. Residues Cys-169, His-172, Cys-192, and His-197 each contribute to the Zn(2+) site. Residues 211-286 are a coiled coil; the sequence is ARRPGLEELL…LRAHVEAAEE (76 aa). Residues 374 to 384 show a composition bias toward basic and acidic residues; it reads LPQKDSGKDGA. A disordered region spans residues 374 to 462; sequence LPQKDSGKDG…PAPGPNLEGS (89 aa). Polar residues predominate over residues 389–405; it reads GDATQPQSRDGVQTPNQ. Thr-402 carries the phosphothreonine modification. Over residues 407-416 the composition is skewed to basic and acidic residues; the sequence is DGAKTPKESR. Thr-419 bears the Phosphothreonine mark. Residues 434-446 are compositionally biased toward basic residues; sequence SNKKRKFKGRLKS. A Phosphoserine modification is found at Ser-452.

It belongs to the TRIM/RBCC family. As to quaternary structure, interacts with STING1. Interacts with TICAM1.

The protein resides in the cytoplasm. The enzyme catalyses S-ubiquitinyl-[E2 ubiquitin-conjugating enzyme]-L-cysteine + [acceptor protein]-L-lysine = [E2 ubiquitin-conjugating enzyme]-L-cysteine + N(6)-ubiquitinyl-[acceptor protein]-L-lysine.. It participates in protein modification; protein ubiquitination. E3 ubiquitin-protein ligase that plays a key role in innate antiviral immunity by mediating ubiquitination of CGAS and STING1. In response to pathogen- and host-derived double-stranded DNA (dsDNA), targets STING1 to 'Lys-63'-linked ubiquitination, thereby promoting its homodimerization, a step required for the production of type I interferon IFN-beta. Also mediate monoubiquitination of CGAS, thereby promoting CGAS oligomerization and subsequent activation. Independently of its E3 ubiquitin ligase activity, positive regulator of TLR3 signaling. Potentiates extracellular double stranded RNA (dsRNA)-induced expression of IFNB1 and interferon-stimulated genes ISG15, IFIT1/ISG56, CXCL10, OASL and CCL5/RANTES. Restricts bovine viral diarrhea virus (BVDV) replication. The protein is E3 ubiquitin-protein ligase TRIM56 of Bos taurus (Bovine).